The following is a 370-amino-acid chain: Small ribosomal subunit biogenesis GTPase RsgA (370 aa).

A CP-type G domain is found at 97–255 (QTQLDRPPIA…LADTPGFNQP (159 aa)). GTP-binding positions include 146–149 (NKSD) and 197–205 (GPSGVGKSS). Positions 280, 285, 287, and 293 each coordinate Zn(2+). Residues 328 to 370 (TLKLKTKGKGQSQYEPKLESKKYRRTSRRTQVQGLQDLYQEEE) are disordered.

It belongs to the TRAFAC class YlqF/YawG GTPase family. RsgA subfamily. Monomer. Associates with 30S ribosomal subunit, binds 16S rRNA. Zn(2+) serves as cofactor.

Its subcellular location is the cytoplasm. Functionally, one of several proteins that assist in the late maturation steps of the functional core of the 30S ribosomal subunit. Helps release RbfA from mature subunits. May play a role in the assembly of ribosomal proteins into the subunit. Circularly permuted GTPase that catalyzes slow GTP hydrolysis, GTPase activity is stimulated by the 30S ribosomal subunit. This chain is Small ribosomal subunit biogenesis GTPase RsgA, found in Trichormus variabilis (strain ATCC 29413 / PCC 7937) (Anabaena variabilis).